Reading from the N-terminus, the 1254-residue chain is MDSQQSDLFDTASQPDTVADEYTFLEFNTQGDSEFDYQDFGSPTAWPTPSDSISIADVADRGEGGAAADHHSEASSPSSLSAGAGNGAKVGRGGVGGSGGVSSSSQVDALAAGVGNLNFEETGDDDGFDYGKNDFTEHACKYCGISNPACVVRCNVASCRKWFCNSRGNTSGSHIVNHLVRAKHKEVCLHRDSPLGETILECYNCGCRNVFLLGFISAKTDSVVVLLCRDPCLNVNALKDMNWDLSQWCPLIDDRCFLPWLVKVPSEQEQLRARQISAQQINKIEELWKTNPDATLEDLEKPGVDDEPQPVQPKYEDAYQYQNVFAPLIKLEADYDKMMKESQSKENLTVRWDIGLNKKRVAYFVFPKEENELRLVPGDELRLRYSGDAVHPSWQSVGHVIKLTAQEEVALELRANQGVPIDVNHGFSVDFVWKSTSFDRMQGAMKNFAVDETSVSGYIYHQLLGHEVEAQMVRNTLPRRFGVPGLPELNASQVNAVKSVLQKPISLIQGPPGTGKTVTSAAIVYHMAKQGQGQVLVCAPSNVAVDQLAEKISATGLKVVRLCAKSREAVSSPVEYLTLHYQVRHLDTSEKSELHKLQQLKDEQGELSSSDEKKYKNLKRATEREITQSADVICCTCVGAADLRLSNFRFRQVLIDESTQATEPECLIPLVLGVKQVVLVGDHCQLGPVIMCKKAARAGLAQSLFERLVTLGIKPIRLQVQYRMHPALSEFPSNSFYEGTLQNGVTIIERQTTGIDFPWPVPNRPMFFYVQLGQEEISASGTSYLNRTEAANVEKLVTAFLKSGVVPSQIGVITPYEGQRAYIVNYMARNGSLRQQLYKEIEVASVDSFQGREKDYIILSCVRSNEHQGIGFLNDPRRLNVALTRARYGIVILGNPKVLSKQPLWNGLLTHYKEHECLVEGPLNNLKQSMVQFQKPRKIYNDRRLFYGGGAGMIGNDNFGSGNPNADRRGSRGRAGGSYLPSGPPNGARPGLHPAGYPIPRVPLSPFPGGPPSQPYAIPTRGPVGAVPHAPQPGNHGFGAGRGTSVGGHLPHQQATQHNVGTIGPSLNFPLDSPNSQPSPGGPLSQPGYGSQAFRDGFSMGGISQDFLADDIKSQGSHDPYNMADFATQASPGGFAVDYATQGAHGAFPGNFMNQNSQGGYSRFSGINDFMSQEYMAHGGQGLFTQAGFIDSSQDDGQQNPYGVNNPNLQSQGLPNSLYSQPFAHYNTQPLNLSGPQQSQPNQSSQNPKHPYNG.

The span at 1 to 16 (MDSQQSDLFDTASQPD) shows a compositional bias: polar residues. Disordered regions lie at residues 1–21 (MDSQ…VADE), 33–52 (SEFD…PSDS), and 61–102 (RGEG…GGVS). A s/TQ motifs-rich, involved in the target transcript degradation steps of nonsense-mediated decay (NMD) region spans residues 1-106 (MDSQQSDLFD…GSGGVSSSSQ (106 aa)). Basic and acidic residues predominate over residues 61 to 73 (RGEGGAAADHHSE). Over residues 74 to 83 (ASSPSSLSAG) the composition is skewed to low complexity. The segment covering 84–100 (AGNGAKVGRGGVGGSGG) has biased composition (gly residues). A Upf1 CH-rich domain is found at 132–291 (KNDFTEHACK…NKIEELWKTN (160 aa)). Cysteine 140, cysteine 143, cysteine 154, cysteine 159, cysteine 164, histidine 174, histidine 178, histidine 184, cysteine 202, cysteine 205, cysteine 228, and cysteine 232 together coordinate Zn(2+). The C3H stretch occupies residues 140 to 174 (CKYCGISNPACVVRCNVASCRKWFCNSRGNTSGSH). Residues 154-184 (CNVASCRKWFCNSRGNTSGSHIVNHLVRAKH) are CC/SHH/C. The tract at residues 202-232 (CYNCGCRNVFLLGFISAKTDSVVVLLCRDPC) is C4. Residues glutamine 493, 513 to 517 (GTGKT), glutamine 685, tyrosine 722, and glutamate 853 each bind ATP. The 133-residue stretch at 497 to 629 (VKSVLQKPIS…RATEREITQS (133 aa)) folds into the Helicase ATP-binding domain. Disordered regions lie at residues 956–1096 (NDNF…AFRD) and 1187–1254 (AGFI…PYNG). Residues 1000–1014 (PRVPLSPFPGGPPSQ) show a composition bias toward pro residues. The s/TQ motifs-rich, involved in the target transcript degradation steps of nonsense-mediated decay (NMD) stretch occupies residues 1013 to 1254 (SQPYAIPTRG…SQNPKHPYNG (242 aa)). Residues 1036–1046 (HGFGAGRGTSV) show a composition bias toward gly residues. The span at 1073–1092 (SPNSQPSPGGPLSQPGYGSQ) shows a compositional bias: low complexity. Polar residues predominate over residues 1191 to 1235 (DSSQDDGQQNPYGVNNPNLQSQGLPNSLYSQPFAHYNTQPLNLSG). Over residues 1236–1248 (PQQSQPNQSSQNP) the composition is skewed to low complexity.

Belongs to the DNA2/NAM7 helicase family. Post-translationally, highly phosphorylated in S/TQ-enriched N-terminal and C-terminal regions; required for formation of mRNA surveillance complexes.

It is found in the cytoplasm. Its subcellular location is the P-body. The catalysed reaction is ATP + H2O = ADP + phosphate + H(+). Functionally, involved in nonsense-mediated decay (NMD) of mRNAs containing premature stop codons (premature termination codon PTC) by associating with the nuclear exon junction complex (EJC) and serving as link between the EJC core and NMD machinery. Eliminates the production of nonsense-containing RNAs (ncRNAs). Required for plant development and adaptation to environmental stresses, including plant defense and response to wounding. This Arabidopsis thaliana (Mouse-ear cress) protein is Regulator of nonsense transcripts 1 homolog (UPF1).